Consider the following 154-residue polypeptide: Mating pheromone 2 (154 aa).

The first 16 residues, 1 to 16 (MKAIFIILAILMVTQA), serve as a signal peptide directing secretion. The propeptide occupies 17–52 (FKMTSKVNTKLQSQIQSKFQSKNKLASTFQTSSQLK).

It localises to the secreted. In terms of biological role, mating ciliate pheromones (or gamones) are diffusible extracellular communication signals that distinguish different intraspecific classes of cells commonly referred to as 'mating types'. They prepare the latter for conjugation by changing their cell surface properties. This Euplotoides octocarinatus (Freshwater ciliate) protein is Mating pheromone 2.